The chain runs to 863 residues: Disintegrin and metalloproteinase domain-containing protein 15 (863 aa).

An N-terminal signal peptide occupies residues 1 to 17 (MRLALLWALGLLGAGSP). Residues 18–206 (LPSWPLPNIG…LGQRHIRRRR (189 aa)) constitute a propeptide that is removed on maturation. The disordered stretch occupies residues 22–45 (PLPNIGGTEEQQAESEKAPREPLE). Residues 35–44 (ESEKAPREPL) show a composition bias toward basic and acidic residues. The Cysteine switch motif lies at 177-184 (HTCALSWR). Cysteine 179 contributes to the Zn(2+) binding site. Residues 207 to 696 (DVVTETKTVE…QLKATSSLTT (490 aa)) lie on the Extracellular side of the membrane. The region spanning 213–414 (KTVELVIVAD…GMGSCLFERL (202 aa)) is the Peptidase M12B domain. A glycan (N-linked (GlcNAc...) asparagine) is linked at asparagine 237. 4 disulfide bridges follow: cysteine 323-cysteine 409, cysteine 365-cysteine 393, cysteine 367-cysteine 376, and cysteine 480-cysteine 500. Histidine 348 contacts Zn(2+). The active site involves glutamate 349. Zn(2+) contacts are provided by histidine 352 and histidine 358. N-linked (GlcNAc...) asparagine glycans are attached at residues asparagine 389 and asparagine 392. In terms of domain architecture, Disintegrin spans 421 to 508 (AAFCGNMFVE…QCPPDVSLGD (88 aa)). The short motif at 484–486 (RGD) is the Cell attachment site element. 2 N-linked (GlcNAc...) asparagine glycosylation sites follow: asparagine 606 and asparagine 611. 3 cysteine pairs are disulfide-bonded: cysteine 657–cysteine 667, cysteine 661–cysteine 673, and cysteine 675–cysteine 684. One can recognise an EGF-like domain in the interval 657–685 (CRSKCHGHGVCDSNRHCYCEEGWAPPDCT). Residues 697–717 (GLLLSLLVLLVLVMLGASYWY) traverse the membrane as a helical segment. Phosphotyrosine; by HCK and LCK is present on residues tyrosine 715 and tyrosine 735. Topologically, residues 718-863 (RARLHQRLCQ…PPPTVSSLYL (146 aa)) are cytoplasmic. The disordered stretch occupies residues 736-863 (RAAQSGPSER…PPPTVSSLYL (128 aa)). Residues 767–778 (PAPPSRPLPPDP) show a composition bias toward pro residues. Residues 779 to 789 (VSKRLQAELAD) show a composition bias toward basic and acidic residues. Composition is skewed to pro residues over residues 791 to 800 (PNPPTRPLPA) and 813 to 824 (AKPPPPRKPLPA). 2 short sequence motifs (SH3-binding) span residues 815-821 (PPPPRKP) and 850-856 (RPAPPPP).

In terms of assembly, interacts with ITAGV-ITGB3 (vitronectin receptor). Interacts with SH3GL2 and SNX9; this interaction occurs preferentially with ADAM15 precursor, rather than the processed form, suggesting it occurs in a secretory pathway compartment prior to the medial Golgi. Interacts with ITAG9-ITGB1. Interacts specifically with Src family protein-tyrosine kinases (PTKs). Interacts with SH3PXD2A. Interacts with ITAGV-ITGB1. Interacts with GRB2, HCK, ITSN1, ITSN2, LYN, MAPK1, MAPK3, NCF1, NCK1, nephrocystin, PTK6, SNX33, LCK and SRC. Zn(2+) serves as cofactor. Post-translationally, the precursor is cleaved by a furin endopeptidase. In terms of processing, phosphorylation increases association with PTKs. Expressed in colon and small intestine. Expressed in airway smooth muscle and glomerular mesangial cells (at protein level). Ubiquitously expressed. Overexpressed in atherosclerotic lesions. Constitutively expressed in cultured endothelium and smooth muscle. Expressed in chondrocytes. Expressed in airway smooth muscle and glomerular mesangial cells.

Its subcellular location is the endomembrane system. It localises to the cell junction. The protein resides in the adherens junction. The protein localises to the cell projection. It is found in the cilium. Its subcellular location is the flagellum. It localises to the cytoplasmic vesicle. The protein resides in the secretory vesicle. The protein localises to the acrosome. With respect to regulation, inhibited by hydroxamate-type metalloproteinase inhibitors such as marimastat. Inhibited by metalloproteinase inhibitor 2 (TIMP-2) and TIMP-3 at nanomolar concentrations. Not significantly inhibited by TIMP-1 at concentrations of up to 100 nM. Not activated by PMA or ionomycin. Active metalloproteinase with gelatinolytic and collagenolytic activity. Plays a role in the wound healing process. Mediates both heterotypic intraepithelial cell/T-cell interactions and homotypic T-cell aggregation. Inhibits beta-1 integrin-mediated cell adhesion and migration of airway smooth muscle cells. Suppresses cell motility on or towards fibronectin possibly by driving alpha-v/beta-1 integrin (ITAGV-ITGB1) cell surface expression via ERK1/2 inactivation. Cleaves E-cadherin in response to growth factor deprivation. Plays a role in glomerular cell migration. Plays a role in pathological neovascularization. May play a role in cartilage remodeling. May be proteolytically processed, during sperm epididymal maturation and the acrosome reaction. May play a role in sperm-egg binding through its disintegrin domain. The protein is Disintegrin and metalloproteinase domain-containing protein 15 (ADAM15) of Homo sapiens (Human).